The primary structure comprises 311 residues: Aspartate carbamoyltransferase catalytic subunit (311 aa).

Carbamoyl phosphate is bound by residues arginine 58 and threonine 59. An L-aspartate-binding site is contributed by lysine 86. Residues arginine 108, histidine 136, and glutamine 139 each coordinate carbamoyl phosphate. L-aspartate contacts are provided by arginine 169 and arginine 223. Residues glycine 264 and proline 265 each contribute to the carbamoyl phosphate site.

It belongs to the aspartate/ornithine carbamoyltransferase superfamily. ATCase family. In terms of assembly, heterododecamer (2C3:3R2) of six catalytic PyrB chains organized as two trimers (C3), and six regulatory PyrI chains organized as three dimers (R2).

It carries out the reaction carbamoyl phosphate + L-aspartate = N-carbamoyl-L-aspartate + phosphate + H(+). The protein operates within pyrimidine metabolism; UMP biosynthesis via de novo pathway; (S)-dihydroorotate from bicarbonate: step 2/3. In terms of biological role, catalyzes the condensation of carbamoyl phosphate and aspartate to form carbamoyl aspartate and inorganic phosphate, the committed step in the de novo pyrimidine nucleotide biosynthesis pathway. The protein is Aspartate carbamoyltransferase catalytic subunit of Pelodictyon phaeoclathratiforme (strain DSM 5477 / BU-1).